The sequence spans 184 residues: MALLPILSYPDPRLRTIATPVKEVTAEIKTLITDMIETMYDAQGIGLAASQVDHHIQLIVMDLSEDKDSPRVFINPKVTPLVEEKQPYEEGCLSVPDVYDKVERPNKVRIEALDENGNKIDEEVEGLLAVCIQHEMDHLNGVIFVDYLSRLKQTRARDKVRKVLKIREKQGEQVAEKEPQPANS.

The Fe cation site is built by cysteine 92 and histidine 134. The active site involves glutamate 135. Histidine 138 is a Fe cation binding site.

Belongs to the polypeptide deformylase family. Fe(2+) serves as cofactor.

The catalysed reaction is N-terminal N-formyl-L-methionyl-[peptide] + H2O = N-terminal L-methionyl-[peptide] + formate. Its function is as follows. Removes the formyl group from the N-terminal Met of newly synthesized proteins. Requires at least a dipeptide for an efficient rate of reaction. N-terminal L-methionine is a prerequisite for activity but the enzyme has broad specificity at other positions. This chain is Peptide deformylase, found in Psychrobacter cryohalolentis (strain ATCC BAA-1226 / DSM 17306 / VKM B-2378 / K5).